The chain runs to 860 residues: Leucine--tRNA ligase (860 aa).

Residues 42–52 (PYPSGRLHMGH) carry the 'HIGH' region motif. The short motif at 619 to 623 (KMSKS) is the 'KMSKS' region element. Position 622 (Lys-622) interacts with ATP.

It belongs to the class-I aminoacyl-tRNA synthetase family.

The protein localises to the cytoplasm. It catalyses the reaction tRNA(Leu) + L-leucine + ATP = L-leucyl-tRNA(Leu) + AMP + diphosphate. The protein is Leucine--tRNA ligase of Pectobacterium carotovorum subsp. carotovorum (strain PC1).